A 216-amino-acid polypeptide reads, in one-letter code: Large ribosomal subunit protein uL1A (216 aa).

A phosphoserine mark is found at Ser85 and Ser128.

It belongs to the universal ribosomal protein uL1 family. Component of the large ribosomal subunit (LSU). Mature yeast ribosomes consist of a small (40S) and a large (60S) subunit. The 40S small subunit contains 1 molecule of ribosomal RNA (18S rRNA) and at least 33 different proteins. The large 60S subunit contains 3 rRNA molecules (25S, 5.8S and 5S rRNA) and at least 46 different proteins. uL1 forms part of the L1 stalk.

It is found in the cytoplasm. Component of the ribosome, a large ribonucleoprotein complex responsible for the synthesis of proteins in the cell. The small ribosomal subunit (SSU) binds messenger RNAs (mRNAs) and translates the encoded message by selecting cognate aminoacyl-transfer RNA (tRNA) molecules. The large subunit (LSU) contains the ribosomal catalytic site termed the peptidyl transferase center (PTC), which catalyzes the formation of peptide bonds, thereby polymerizing the amino acids delivered by tRNAs into a polypeptide chain. The nascent polypeptides leave the ribosome through a tunnel in the LSU and interact with protein factors that function in enzymatic processing, targeting, and the membrane insertion of nascent chains at the exit of the ribosomal tunnel. uL1 forms part of the L1 stalk, a mobile element that plays a role in evacuating the exit-site tRNA. The sequence is that of Large ribosomal subunit protein uL1A (rpl102) from Schizosaccharomyces pombe (strain 972 / ATCC 24843) (Fission yeast).